A 477-amino-acid chain; its full sequence is Probable cytosolic Fe-S cluster assembly factor GL21135 (477 aa).

Positions 23, 69, 72, 75, 188, 244, 396, and 400 each coordinate [4Fe-4S] cluster.

It belongs to the NARF family.

In terms of biological role, component of the cytosolic iron-sulfur (Fe/S) protein assembly machinery. Required for maturation of extramitochondrial Fe/S proteins. The sequence is that of Probable cytosolic Fe-S cluster assembly factor GL21135 from Drosophila persimilis (Fruit fly).